We begin with the raw amino-acid sequence, 387 residues long: WD repeat-containing protein 89 (387 aa).

6 WD repeats span residues 21-65 (KEPT…VLRE), 68-107 (GYPG…EKPV), 112-156 (GYPS…QNLS), 168-208 (THSD…EEDA), 214-254 (NSIS…TDEP), and 319-358 (GHAA…KTFT).

This chain is WD repeat-containing protein 89 (WDR89), found in Homo sapiens (Human).